The following is a 546-amino-acid chain: Chaperonin GroEL (546 aa).

ATP-binding positions include 30–33 (TLGP), K51, 87–91 (DGTTT), G415, and D497. The disordered stretch occupies residues 527–546 (PKKDSPAPAMPGGGMGGMDF). Residues 537 to 546 (PGGGMGGMDF) are compositionally biased toward gly residues.

It belongs to the chaperonin (HSP60) family. In terms of assembly, forms a cylinder of 14 subunits composed of two heptameric rings stacked back-to-back. Interacts with the co-chaperonin GroES.

Its subcellular location is the cytoplasm. The catalysed reaction is ATP + H2O + a folded polypeptide = ADP + phosphate + an unfolded polypeptide.. Its function is as follows. Together with its co-chaperonin GroES, plays an essential role in assisting protein folding. The GroEL-GroES system forms a nano-cage that allows encapsulation of the non-native substrate proteins and provides a physical environment optimized to promote and accelerate protein folding. This Methylobacterium radiotolerans (strain ATCC 27329 / DSM 1819 / JCM 2831 / NBRC 15690 / NCIMB 10815 / 0-1) protein is Chaperonin GroEL.